Here is a 407-residue protein sequence, read N- to C-terminus: Phospholipid-transporting ATPase accessory subunit CDC50 (407 aa).

Positions 1 to 33 are disordered; sequence MAPRRRRGAGQDGSDDGRSDSDAPKNRPPNTAF. Residues 1–48 lie on the Cytoplasmic side of the membrane; that stretch reads MAPRRRRGAGQDGSDDGRSDSDAPKNRPPNTAFRQQRMRAWQCVLTPK. Residues 15-25 are compositionally biased toward basic and acidic residues; it reads DDGRSDSDAPK. A helical transmembrane segment spans residues 49–69; the sequence is LIVTVFSILAAIYLGFGAWLT. Topologically, residues 70-359 are extracellular; it reads YLAHTVRDLK…TMGSRNIWPG (290 aa). Residues cysteine 85 and cysteine 139 are joined by a disulfide bond. N-linked (GlcNAc...) asparagine glycosylation is found at asparagine 131 and asparagine 189. A disulfide bridge links cysteine 193 with cysteine 210. Asparagine 219, asparagine 232, asparagine 241, and asparagine 314 each carry an N-linked (GlcNAc...) asparagine glycan. Residues 360 to 380 traverse the membrane as a helical segment; the sequence is IIFLIVGGICLVLDIYFILSF. At 381–407 the chain is on the cytoplasmic side; sequence FIWRPRKLGDPSYLSWNQPSAPGGHSS.

Belongs to the CDC50/LEM3 family. Component of a flippase complex consisting of DNF1 and CDC50. Interacts with DNF1; the interaction is direct.

It localises to the cell membrane. In terms of biological role, accessory component of a P4-ATPase flippase complex which catalyzes the hydrolysis of ATP coupled to the transport of phosphatidylcholine and phosphatidylserine from the lumen to the cytosolic leaflet of membranes and ensures the maintenance of asymmetric distribution of phospholipids. The polypeptide is Phospholipid-transporting ATPase accessory subunit CDC50 (Chaetomium thermophilum (strain DSM 1495 / CBS 144.50 / IMI 039719) (Thermochaetoides thermophila)).